Reading from the N-terminus, the 74-residue chain is Peptide Im-4 (74 aa).

The first 22 residues, 1-22 (MKFQYLLAIFMIVLVVTDHCQA), serve as a signal peptide directing secretion. Lys39 is modified (lysine amide; partial). A propeptide spanning residues 40 to 74 (GRRRRQLEARYEPQQRNFRKREIDFEKLFANMPDY) is cleaved from the precursor.

This sequence belongs to the non-disulfide-bridged peptide (NDBP) superfamily. Short antimicrobial peptide (group 4) family. Expressed by the venom gland.

Its subcellular location is the secreted. It is found in the target cell membrane. Functionally, antimicrobial peptide that probably forms pores in target membranes. Has antibacterial activity against Gram-positive bacteria S.aureus NBRC 13276 (MIC=5-10 uM) and B.subtilis NBRC 3009 (MIC=2.5-5 uM) but not against Gram-negative bacterium E.coli NBRC 3972. This Isometrus maculatus (Lesser brown scorpion) protein is Peptide Im-4.